The primary structure comprises 197 residues: MMFFKRTILACTVALLFPALPSYAEVGAENGNSAQAEKPGLWKRFTSNVAETWNNSPNKDLYVPAITWHNRLTYSQEKIDSYNERPWGGGYGISRYDSDGDWHGLYMMVFKDSFNKWEPIGGYAYEKIWRPLEDKDFRLGLGFTASITARDNWNYIPIPAPLPLASIGYKQLTFQATYIPGTYNNGNVFFGWFRWQF.

An N-terminal signal peptide occupies residues 1–24 (MMFFKRTILACTVALLFPALPSYA). Catalysis depends on residues H69, D112, and S113.

It belongs to the lipid A palmitoyltransferase family. In terms of assembly, homodimer.

Its subcellular location is the cell outer membrane. The enzyme catalyses a lipid A + a 1,2-diacyl-sn-glycero-3-phosphocholine = a hepta-acyl lipid A + a 2-acyl-sn-glycero-3-phosphocholine. The catalysed reaction is a lipid IVA + a 1,2-diacyl-sn-glycero-3-phosphocholine = a lipid IVB + a 2-acyl-sn-glycero-3-phosphocholine. It catalyses the reaction a lipid IIA + a 1,2-diacyl-sn-glycero-3-phosphocholine = a lipid IIB + a 2-acyl-sn-glycero-3-phosphocholine. Functionally, transfers a fatty acid residue from the sn-1 position of a phospholipid to the N-linked hydroxyfatty acid chain on the proximal unit of lipid A or its precursors. This is Lipid A acyltransferase PagP from Serratia proteamaculans (strain 568).